The following is a 354-amino-acid chain: uncharacterized protein (354 aa).

The disordered stretch occupies residues 96-130 (QVCPASAPNGKRAMKIPKVKEPRGENSSKKSSADQ). Residues 113–127 (KVKEPRGENSSKKSS) show a composition bias toward basic and acidic residues.

This is an uncharacterized protein from Caenorhabditis elegans.